Consider the following 529-residue polypeptide: tRNA pseudouridine synthase Pus10 (529 aa).

Zn(2+)-binding residues include Cys-21 and Cys-24. The stretch at 42–89 (KELLNELQKFLETEKDELILEVMNPPPKKIRLQELEDSIDNLSQNGEG) forms a coiled coil. Phosphoserine is present on residues Ser-79 and Ser-84. Zn(2+) is bound by residues Cys-109 and Cys-112. The segment at 304–317 (TPWIIDGERKLESS) is RNA binding forefinger loop. The active-site Nucleophile is Asp-344. The interval 442 to 457 (QKTPLRVLHRRPLAVR) is RNA binding thumb loop.

It belongs to the pseudouridine synthase Pus10 family. In terms of assembly, interacts with components of the microprocessor complex DROSHA and DGCR8. Proteolytically cleaved during TRAIL-induced cell death. Cleaved, in vitro, either by caspase-3 (CASP3) or caspase-8 (CASP8).

It localises to the nucleus. It is found in the cytoplasm. The protein localises to the mitochondrion. It carries out the reaction uridine(55) in tRNA = pseudouridine(55) in tRNA. The enzyme catalyses uridine(54) in tRNA = pseudouridine(54) in tRNA. Protein with different functions depending on its subcellular location: involved in miRNA processing in the nucleus and acts as a tRNA pseudouridylate synthase in the cytoplasm. In the cytoplasm, acts as a pseudouridylate synthase by catalyzing synthesis of pseudouridine(54) and pseudouridine(55) from uracil-54 and uracil-55, respectively, in the psi GC loop of a subset of tRNAs. tRNA pseudouridylate synthase activity is enhanced by the presence of 1-methyladenosine at position 53-61 of tRNAs. Does not show tRNA pseudouridylate synthase activity in the nucleus. In the nucleus, promotes primary microRNAs (pri-miRNAs) processing independently of its RNA pseudouridylate synthase activity. Binds pri-miRNAs. Modulator of TRAIL/TNFSF10-induced cell death via activation of procaspase-8 and BID cleavage. Required for the progression of the apoptotic signal through intrinsic mitochondrial cell death. This chain is tRNA pseudouridine synthase Pus10, found in Homo sapiens (Human).